The following is a 307-amino-acid chain: uncharacterized protein (307 aa).

The 58-residue stretch at 11-68 folds into the HTH lysR-type domain; that stretch reads IRLRHLHTFVAVAQQGTLGRAAETLNLSQPALSKTLNELEQLTGARLFERGRQGAQLT. The H-T-H motif DNA-binding region spans 28 to 47; it reads LGRAAETLNLSQPALSKTLN.

The protein belongs to the LysR transcriptional regulatory family.

This is an uncharacterized protein from Escherichia coli (strain K12).